Here is a 325-residue protein sequence, read N- to C-terminus: Phospho-N-acetylmuramoyl-pentapeptide-transferase (325 aa).

The next 10 membrane-spanning stretches (helical) occupy residues 3–23, 48–68, 79–99, 106–126, 136–156, 174–194, 199–219, 223–243, 246–266, and 298–318; these read LMIY…PILI, GTPT…VFVV, AIFA…LKII, LKAY…GFYA, IIVP…PFII, GLAT…SYAT, LAVF…YNAY, VFMG…VAMM, LPLI…SVIL, and IVSI…LSLI.

It belongs to the glycosyltransferase 4 family. MraY subfamily. Mg(2+) is required as a cofactor.

The protein resides in the cell membrane. The enzyme catalyses UDP-N-acetyl-alpha-D-muramoyl-L-alanyl-gamma-D-glutamyl-meso-2,6-diaminopimeloyl-D-alanyl-D-alanine + di-trans,octa-cis-undecaprenyl phosphate = di-trans,octa-cis-undecaprenyl diphospho-N-acetyl-alpha-D-muramoyl-L-alanyl-D-glutamyl-meso-2,6-diaminopimeloyl-D-alanyl-D-alanine + UMP. It functions in the pathway cell wall biogenesis; peptidoglycan biosynthesis. In terms of biological role, catalyzes the initial step of the lipid cycle reactions in the biosynthesis of the cell wall peptidoglycan: transfers peptidoglycan precursor phospho-MurNAc-pentapeptide from UDP-MurNAc-pentapeptide onto the lipid carrier undecaprenyl phosphate, yielding undecaprenyl-pyrophosphoryl-MurNAc-pentapeptide, known as lipid I. The chain is Phospho-N-acetylmuramoyl-pentapeptide-transferase from Clostridium novyi (strain NT).